We begin with the raw amino-acid sequence, 204 residues long: Large ribosomal subunit protein eL15 (204 aa).

The segment at 185–204 (GGSRRAAWKRKNREHMHRKR) is disordered. A compositionally biased stretch (basic residues) spans 190 to 204 (AAWKRKNREHMHRKR).

This sequence belongs to the eukaryotic ribosomal protein eL15 family.

This chain is Large ribosomal subunit protein eL15 (RpL15), found in Drosophila melanogaster (Fruit fly).